The following is a 277-amino-acid chain: MPSVPSEAPASPSPKRVRTRHFQAAKEEGSRFTGLTSYDTLTAQIFDEAGIDFLLVGDSAANTVLGYDTTLPMTVDELIPLTRAVARAAKRAFVVADLPFGSYETGPQEALRTAVRFMKETGAHAVKLEGGERSAEQIRRIVDAGVPVMGHIGFTPQSEHGLGGHLVQGRGQGAEQVVDDAHAVEEAGAFAVVLEMVPADVAQRVTQELRIPTIGVGAGPHVDGQLLVWTDWAGFTTGRVPRFAKQYADLKDVLTEAARMYRDEVGSGVFPGPEHSF.

Asp58 and Asp97 together coordinate Mg(2+). Residues 58-59 (DS), Asp97, and Lys127 each bind 3-methyl-2-oxobutanoate. Position 129 (Glu129) interacts with Mg(2+). Glu195 (proton acceptor) is an active-site residue.

The protein belongs to the PanB family. In terms of assembly, homodecamer; pentamer of dimers. Mg(2+) serves as cofactor.

It is found in the cytoplasm. It carries out the reaction 3-methyl-2-oxobutanoate + (6R)-5,10-methylene-5,6,7,8-tetrahydrofolate + H2O = 2-dehydropantoate + (6S)-5,6,7,8-tetrahydrofolate. The protein operates within cofactor biosynthesis; (R)-pantothenate biosynthesis; (R)-pantoate from 3-methyl-2-oxobutanoate: step 1/2. Functionally, catalyzes the reversible reaction in which hydroxymethyl group from 5,10-methylenetetrahydrofolate is transferred onto alpha-ketoisovalerate to form ketopantoate. This Leifsonia xyli subsp. xyli (strain CTCB07) protein is 3-methyl-2-oxobutanoate hydroxymethyltransferase.